We begin with the raw amino-acid sequence, 223 residues long: DNA mismatch repair protein MutH (223 aa).

The protein belongs to the MutH family.

It localises to the cytoplasm. Sequence-specific endonuclease that cleaves unmethylated GATC sequences. It is involved in DNA mismatch repair. The sequence is that of DNA mismatch repair protein MutH from Shewanella sp. (strain MR-4).